The chain runs to 404 residues: Acetate kinase (404 aa).

Asn-7 lines the Mg(2+) pocket. Position 14 (Lys-14) interacts with ATP. Residue Arg-91 participates in substrate binding. The active-site Proton donor/acceptor is the Asp-148. Residues 208–212 and 283–285 each bind ATP; these read HLGNG and DLR. Glu-388 serves as a coordination point for Mg(2+).

The protein belongs to the acetokinase family. In terms of assembly, homodimer. The cofactor is Mg(2+). Mn(2+) serves as cofactor.

It is found in the cytoplasm. The enzyme catalyses acetate + ATP = acetyl phosphate + ADP. It functions in the pathway metabolic intermediate biosynthesis; acetyl-CoA biosynthesis; acetyl-CoA from acetate: step 1/2. In terms of biological role, catalyzes the formation of acetyl phosphate from acetate and ATP. Can also catalyze the reverse reaction. The polypeptide is Acetate kinase (Borrelia turicatae (strain 91E135)).